Here is a 274-residue protein sequence, read N- to C-terminus: Mitogen-activated protein kinase 4 (274 aa).

ATP-binding positions include 1–8 (GCGGNGLV) and K23. One can recognise a Protein kinase domain in the interval 1 to 274 (GCGGNGLVLS…KILTFSPMDR (274 aa)). The active-site Proton acceptor is D123. S160 is subject to Phosphoserine. An SEG motif motif is present at residues 160-162 (SEG).

This sequence belongs to the protein kinase superfamily. CMGC Ser/Thr protein kinase family. MAP kinase subfamily. As to quaternary structure, homodimer. Heterodimer with ERK3/MAPK6. Interacts with MAPKAPK5. Mg(2+) serves as cofactor. In terms of processing, phosphorylated by PAK1, PAK2 and PAK3 in the activation loop resulting in catalytic activation. Phosphorylated by MAPKAPK5 at other sites. Exclusively detected in the brain, where expression is restricted to the choroid plexus and hippocampus, and to a lesser extent in lung.

Its subcellular location is the cytoplasm. The protein localises to the nucleus. The enzyme catalyses L-seryl-[protein] + ATP = O-phospho-L-seryl-[protein] + ADP + H(+). It carries out the reaction L-threonyl-[protein] + ATP = O-phospho-L-threonyl-[protein] + ADP + H(+). With respect to regulation, activated by phosphorylation in the activation loop. In terms of biological role, atypical MAPK protein. Phosphorylates microtubule-associated protein 2 (MAP2) and MAPKAPK5. The precise role of the complex formed with MAPKAPK5 is still unclear, but the complex follows a complex set of phosphorylation events: upon interaction with atypical MAPKAPK5, ERK4/MAPK4 is phosphorylated and then mediates phosphorylation and activation of MAPKAPK5, which in turn phosphorylates ERK4/MAPK4. May promote entry in the cell cycle. The chain is Mitogen-activated protein kinase 4 (Mapk4) from Rattus norvegicus (Rat).